A 174-amino-acid polypeptide reads, in one-letter code: Period clock protein (174 aa).

The segment at 46–134 (SSEGTGAGTG…GTGTGTGTGT (89 aa)) is disordered. Repeat copies occupy residues 49-50 (GT), 51-52 (GA), 53-54 (GT), 55-56 (GT), 57-58 (GT), 59-60 (GT), 61-62 (GT), 63-64 (GT), 65-66 (GT), 67-68 (GT), 69-70 (GT), 71-72 (GT), 73-74 (GT), 75-76 (GT), 77-78 (GT), 79-80 (GT), 81-82 (GT), 83-84 (GT), 85-86 (GT), 87-88 (GT), 89-90 (GT), 91-92 (GT), 93-94 (GT), 95-96 (GT), 97-98 (GT), 99-100 (GT), 101-102 (GT), 103-104 (GT), 105-106 (GT), 107-108 (GT), 109-110 (GT), 111-112 (GT), 113-114 (GT), 115-116 (GT), 117-118 (GT), 119-120 (GT), 121-122 (GT), 123-124 (GT), 125-126 (GT), 127-128 (GT), 129-130 (GT), 131-132 (GT), 133-134 (GT), 135-136 (GT), and 137-138 (GT). The interval 49-138 (GTGAGTGTGT…GTGTGTGTGT (90 aa)) is 45 X 2 AA tandem repeats of G-[TA]. Residues 50-134 (TGAGTGTGTG…GTGTGTGTGT (85 aa)) show a composition bias toward gly residues.

The protein localises to the plastid. Its subcellular location is the chloroplast. This is Period clock protein from Acetabularia acetabulum (Mermaid's wine glass).